The following is a 95-amino-acid chain: Putative septation protein SpoVG (95 aa).

It belongs to the SpoVG family.

Functionally, could be involved in septation. This chain is Putative septation protein SpoVG, found in Clostridium acetobutylicum (strain ATCC 824 / DSM 792 / JCM 1419 / IAM 19013 / LMG 5710 / NBRC 13948 / NRRL B-527 / VKM B-1787 / 2291 / W).